We begin with the raw amino-acid sequence, 138 residues long: Thyrotropin subunit beta (138 aa).

Residues 1–20 form the signal peptide; it reads MTAIYLMSMLFGLACGQAMS. 6 disulfides stabilise this stretch: Cys-22–Cys-72, Cys-36–Cys-87, Cys-39–Cys-125, Cys-47–Cys-103, Cys-51–Cys-105, and Cys-108–Cys-115. The N-linked (GlcNAc...) asparagine glycan is linked to Asn-43. The propeptide occupies 133-138; it reads VVGFSI.

This sequence belongs to the glycoprotein hormones subunit beta family. As to quaternary structure, heterodimer of a common alpha chain and a unique beta chain which confers biological specificity to thyrotropin, lutropin, follitropin and gonadotropin.

Its subcellular location is the secreted. Indispensable for the control of thyroid structure and metabolism. This Canis lupus familiaris (Dog) protein is Thyrotropin subunit beta (TSHB).